The sequence spans 235 residues: MAQVDLLNVKGEKVGTLEISDFVFNIDPNYDVMWRYVDMQLSNRRAGTASTKTRGEVSGGGRKPWPQKHTGRARHGSIRSPIWRHGGVVHGPKPRDWSKKLNKKMKKLALRSALSVKYRENKLLVLDDLKLERPKTKSLKEILQNLQLSDKKTLIVLPWKEEGYMNVKLSGRNLPDVKVIIADNPNNSKNGEKAVRIDGLNVFDMLKYDYLVLTRDMVSKIEEVLGNEAGKALTA.

Residues Arg-45–His-75 form a disordered region. The segment covering Trp-65–His-75 has biased composition (basic residues).

It belongs to the universal ribosomal protein uL4 family. Part of the 50S ribosomal subunit.

In terms of biological role, one of the primary rRNA binding proteins, this protein initially binds near the 5'-end of the 23S rRNA. It is important during the early stages of 50S assembly. It makes multiple contacts with different domains of the 23S rRNA in the assembled 50S subunit and ribosome. Functionally, this protein only weakly controls expression of the E.coli S10 operon. It is incorporated into E.coli ribosomes, however it is not as firmly associated as the endogenous protein. Its function is as follows. Forms part of the polypeptide exit tunnel. The sequence is that of Large ribosomal subunit protein uL4 (rplD) from Thermotoga maritima (strain ATCC 43589 / DSM 3109 / JCM 10099 / NBRC 100826 / MSB8).